The chain runs to 369 residues: MKSRAAVAFAPGKPLEIVEIDVAPPKKGEVLIKVTHTGVCHTDAFTLSGDDPEGVFPVVLGHEGAGVVVEVGEGVTSVKPGDHVIPLYTAECGECEFCRSGKTNLCVAVRETQGKGLMPDGTTRFSYNGQPLYHYMGCSTFSEYTVVAEVSLAKINPEANHEHVCLLGCGVTTGIGAVHNTAKVQPDDSVAVFGLGAIGLAVVQGARQAKAGRIIAIDTNPKKFDLARRFGATDCINPNDYDKPIKDVLLDINKWGIDHTFECIGNVNVMRAALESAHRGWGQSVIIGVAGSGQEISTRPFQLVTGRVWKGSAFGGVKGRSQLPGMVEDAMKGDIDLEPFVTHTMSLDEINDAFDLMHEGKSIRTVIRY.

Residues cysteine 40, histidine 62, cysteine 92, cysteine 95, cysteine 98, cysteine 106, and cysteine 169 each coordinate Zn(2+).

The protein belongs to the zinc-containing alcohol dehydrogenase family. Class-III subfamily. Homodimer. Zn(2+) serves as cofactor.

Its subcellular location is the cytoplasm. The enzyme catalyses S-(hydroxymethyl)glutathione + NADP(+) = S-formylglutathione + NADPH + H(+). The catalysed reaction is S-(hydroxymethyl)glutathione + NAD(+) = S-formylglutathione + NADH + H(+). It catalyses the reaction a primary alcohol + NAD(+) = an aldehyde + NADH + H(+). It carries out the reaction a secondary alcohol + NAD(+) = a ketone + NADH + H(+). The enzyme catalyses S-nitrosoglutathione + NADH + H(+) = S-(hydroxysulfenamide)glutathione + NAD(+). Its function is as follows. Has high formaldehyde dehydrogenase activity in the presence of glutathione and catalyzes the oxidation of normal alcohols in a reaction that is not GSH-dependent. In addition, hemithiolacetals other than those formed from GSH, including omega-thiol fatty acids, also are substrates. Also acts as a S-nitroso-glutathione reductase by catalyzing the NADH-dependent reduction of S-nitrosoglutathione. The protein is S-(hydroxymethyl)glutathione dehydrogenase (frmA) of Escherichia coli (strain SMS-3-5 / SECEC).